Consider the following 2196-residue polypeptide: Non-reducing polyketide synthase CTB1 (2196 aa).

An N-terminal acylcarrier protein transacylase domain (SAT) region spans residues 11–250; sequence AFGDQTYDCS…TRLPITAPYH (240 aa). Residues 381 to 814 form the Ketosynthase family 3 (KS3) domain; that stretch reads KSPIAILAAS…GGNTCLVLED (434 aa). Residues Cys553, His688, and His733 each act as for beta-ketoacyl synthase activity in the active site. The interval 922–1223 is malonyl-CoA:ACP transacylase (MAT) domain; that stretch reads AFTGQGSAFA…QTFASINKDK (302 aa). The tract at residues 1298–1611 is product template (PT) domain; that stretch reads SSSIHKVITN…VPKRLMHYIV (314 aa). The segment at 1302–1441 is N-terminal hotdog fold; the sequence is HKVITNTITA…EKTALKSAAL (140 aa). Positions 1302 to 1608 constitute a PKS/mFAS DH domain; it reads HKVITNTITA…LQGVPKRLMH (307 aa). The Proton acceptor; for dehydratase activity role is filled by His1335. Residues 1460-1608 form a C-terminal hotdog fold region; it reads TYRFSKGMIY…LQGVPKRLMH (149 aa). Catalysis depends on Asp1520, which acts as the Proton donor; for dehydratase activity. Residues 1617–1666 form a disordered region; the sequence is KASGPPTEKKTSSPPVEKKASAPVAPTRPAIQRKNASIPPPATQVTPQNK. Residues 1623–1636 are compositionally biased toward basic and acidic residues; it reads TEKKTSSPPVEKKA. Carrier domains are found at residues 1671-1748 and 1775-1857; these read PSVS…TRLS and DPSP…SGST. O-(pantetheine 4'-phosphoryl)serine is present on residues Ser1708 and Ser1816. Positions 1856–1867 are enriched in polar residues; it reads STESFDSTTTKP. The segment at 1856–1923 is disordered; that stretch reads STESFDSTTT…PPKGRIPPAW (68 aa). The span at 1872–1887 shows a compositional bias: low complexity; it reads ATPPLTDSSASSPPSS. The segment at 1937–2187 is thioesterase (TE) domain; it reads ILFLFPDGAG…SGAQMLVEHM (251 aa).

The cofactor is pantetheine 4'-phosphate.

It catalyses the reaction 6 malonyl-CoA + acetyl-CoA + 6 H(+) = nor-toralactone + 6 CO2 + 7 CoA + 2 H2O. It functions in the pathway mycotoxin biosynthesis. Polyketide synthase; part of the gene cluster that mediates the biosynthesis of cercosporin, a light-activated, non-host-selective toxin. The perylenequinone chromophore of cercosporin absorbs light energy to attain an electronically-activated triplet state and produces active oxygen species such as the hydroxyl radical, superoxide, hydrogen peroxide or singlet oxygen upon reaction with oxygen molecules. These reactive oxygen species cause damage to various cellular components including lipids, proteins and nucleic acids. The first step of cercosporin biosynthesis is performed by the polyketide synthase CTB1 which catalyzes the formation of nor-toralactone. The starter unit acyltransferase (SAT) domain of CTB1 initiates polyketide extension by the selective utilization of acetyl-CoA, which is elongated to the heptaketide in the beta-ketoacyl synthase (KS) domain by successive condensations with six malonyl units introduced by the malonyl acyltransferase (MAT) domain. The product template (PT) domain catalyzes C4-C9 and C2-C11 aldol cyclizations and dehydrations to a trihydroxynaphthalene, which is thought to be delivered to the thioesterase (TE) domain for product release. The bifunctional enzyme CTB3 then methylates nor-toralactone to toralactone before conducting an unusual oxidative aromatic ring opening. The O-methyltransferase CTB2 further methylates the nascent OH-6 of the CBT3 product, blocking further oxidation at this site before the reductase CTB6 reduces the 2-oxopropyl ketone at position C7, giving naphthalene. The FAD-dependent monooxygenase CTB5 in concert with the multicopper oxidase CTB12 are responsible for homodimerization of naphthalene with CTB7 installing the dioxepine moiety, finally producing cercosporin. The fasciclin domain-containing protein CTB11 might act with CTB5 and CTB12 whereas the roles of CTB9 and CTB10 have still to be elucidated. This chain is Non-reducing polyketide synthase CTB1, found in Cercospora nicotianae (Barn spot disease fungus).